Consider the following 384-residue polypeptide: 1-deoxy-D-xylulose 5-phosphate reductoisomerase (384 aa).

Residues threonine 10, glycine 11, serine 12, isoleucine 13, glycine 36, and asparagine 122 each contribute to the NADPH site. Lysine 123 is a binding site for 1-deoxy-D-xylulose 5-phosphate. Glutamate 124 contacts NADPH. Mn(2+) is bound at residue aspartate 148. 4 residues coordinate 1-deoxy-D-xylulose 5-phosphate: serine 149, glutamate 150, serine 174, and histidine 197. Glutamate 150 contacts Mn(2+). Glycine 203 serves as a coordination point for NADPH. Positions 210, 215, 216, and 219 each coordinate 1-deoxy-D-xylulose 5-phosphate. Glutamate 219 lines the Mn(2+) pocket.

This sequence belongs to the DXR family. Mg(2+) serves as cofactor. It depends on Mn(2+) as a cofactor.

The enzyme catalyses 2-C-methyl-D-erythritol 4-phosphate + NADP(+) = 1-deoxy-D-xylulose 5-phosphate + NADPH + H(+). The protein operates within isoprenoid biosynthesis; isopentenyl diphosphate biosynthesis via DXP pathway; isopentenyl diphosphate from 1-deoxy-D-xylulose 5-phosphate: step 1/6. In terms of biological role, catalyzes the NADPH-dependent rearrangement and reduction of 1-deoxy-D-xylulose-5-phosphate (DXP) to 2-C-methyl-D-erythritol 4-phosphate (MEP). This chain is 1-deoxy-D-xylulose 5-phosphate reductoisomerase, found in Chlorobium phaeobacteroides (strain DSM 266 / SMG 266 / 2430).